The sequence spans 92 residues: C-C motif chemokine 3 (92 aa).

The N-terminal stretch at 1–23 (MKVSTAALAVLLCTMALWNEVFS) is a signal peptide. 2 disulfides stabilise this stretch: cysteine 34/cysteine 57 and cysteine 35/cysteine 73.

Belongs to the intercrine beta (chemokine CC) family. As to quaternary structure, self-associates. Also heterodimer of MIP-1-alpha(4-69) and MIP-1-beta(3-69). Interacts with CCR1.

It localises to the secreted. Its function is as follows. Monokine with inflammatory and chemokinetic properties. Binds to CCR1, CCR4 and CCR5. One of the major HIV-suppressive factors produced by CD8+ T-cells. Recombinant MIP-1-alpha induces a dose-dependent inhibition of different strains of HIV-1, HIV-2, and simian immunodeficiency virus (SIV). The sequence is that of C-C motif chemokine 3 (Ccl3) from Rattus norvegicus (Rat).